Consider the following 350-residue polypeptide: Quinolinate phosphoribosyltransferase [decarboxylating] 1 (350 aa).

Substrate contacts are provided by residues Arg-141, 172 to 174 (TRK), Arg-196, Lys-206, Glu-239, Asp-266, 298 to 300 (SGN), and 319 to 321 (SGA).

The protein belongs to the NadC/ModD family.

The enzyme catalyses nicotinate beta-D-ribonucleotide + CO2 + diphosphate = quinolinate + 5-phospho-alpha-D-ribose 1-diphosphate + 2 H(+). It participates in alkaloid biosynthesis; nicotine biosynthesis. Its pathway is cofactor biosynthesis; NAD(+) biosynthesis; nicotinate D-ribonucleotide from quinolinate: step 1/1. In terms of biological role, involved in the biosynthesis of pyridine alkaloid natural products, leading mainly to the production of anabasine, anatabine, nicotine and nornicotine, effective deterrents against herbivores with antiparasitic and pesticide properties (neurotoxins); nornicotine serves as the precursor in the synthesis of the carcinogen compound N'-nitrosonornicotine (NNN). Involved in the catabolism of quinolinic acid (QA). The sequence is that of Quinolinate phosphoribosyltransferase [decarboxylating] 1 from Nicotiana glauca (Glaucous tobacco).